Reading from the N-terminus, the 438-residue chain is GRAS family protein TF80 (438 aa).

The GRAS domain maps to 13–436; that stretch reads LRYDSHGSNP…RPLFSVSAWK (424 aa). The interval 20 to 81 is leucine repeat I (LRI); that stretch reads SNPMIPLIEC…YKIVKHLPGV (62 aa). Residues 100-165 are VHIID; it reads QKYFYDLCPF…GGPPFLKITG (66 aa). Positions 131–135 match the VHIID motif; sequence VHIID. The segment at 175–207 is leucine repeat II (LRII); sequence QMSFHLTTEAGILDFPLQFNPIISKLEDVDFEN. Residues 216–359 form a PFYRE region; it reads VAISSVLQLH…SMLLGEQIKN (144 aa). The LXXLL motif motif lies at 224–228; the sequence is LHSLL. Residues 362 to 436 form an SAW region; the sequence is TCEGVDRKER…RPLFSVSAWK (75 aa).

Belongs to the GRAS family. Interacts with RAM1.

The protein localises to the nucleus. The chain is GRAS family protein TF80 (TF80) from Medicago truncatula (Barrel medic).